The following is a 625-amino-acid chain: TORTIFOLIA1-like protein 4 (625 aa).

The tract at residues 1 to 34 (MSVHGRFPASPPISLSPSSSSTSPSSQSPSTPPD) is disordered. A compositionally biased stretch (low complexity) spans 12–29 (PISLSPSSSSTSPSSQSP). HEAT repeat units lie at residues 69–106 (DSFSPFLNCIHNTDSSVKSPVRKQCVALLSVLSRYHGD), 110–147 (PHLAKMVSTVIRRLRDPDSSVRSACAVATADMSAHVTR), 149–186 (PFASVAKPLIETLIQEGDSNLQIGAALCLAASVDAATD), 190–227 (EQLRKSLPKIGKLLKSDGFKAKAALLSAVGSIITAGGA), and 230–268 (KPVLDWLVPVLIEFLSSEDWAARKSAAEALGKVATAEDL). The interval 391–466 (SVDNKGPHFT…VKNCKDDVEE (76 aa)) is disordered. 3 stretches are compositionally biased toward basic and acidic residues: residues 404-413 (KSSEETEEKA), 420-434 (IIKHTISEKSREDSK), and 455-466 (DSVKNCKDDVEE). Ser475 is modified (phosphoserine). Residues 582–625 (GMRESTDTNNGQRGGSVFQKRSRRDQFQDCMHTTLQKPTTRLST) are disordered. Positions 612–625 (MHTTLQKPTTRLST) are enriched in polar residues.

The polypeptide is TORTIFOLIA1-like protein 4 (Arabidopsis thaliana (Mouse-ear cress)).